A 1004-amino-acid chain; its full sequence is NACHT, LRR and PYD domains-containing protein 9C (1004 aa).

Residues 1–92 (MVDSSSYGLL…TMAQIERRDK (92 aa)) form the Pyrin domain. Residues 143–465 (ATAVVLGTRG…KQDKDTYHPV (323 aa)) form the NACHT domain. 149–156 (GTRGKGKT) provides a ligand contact to ATP. LRR repeat units lie at residues 750 to 770 (KVKH…MFLC), 779 to 800 (VLES…HLYE), 807 to 828 (HLSL…LLCE), 836 to 857 (TLKE…EISA), and 864 to 884 (NLKT…KRLC).

It belongs to the NLRP family. Oocyte specific.

It is found in the cytoplasm. Its function is as follows. May be involved in inflammation. This Mus musculus (Mouse) protein is NACHT, LRR and PYD domains-containing protein 9C (Nlrp9c).